The following is an 89-amino-acid chain: UPF0223 protein BCA_4066 (89 aa).

The protein belongs to the UPF0223 family.

This chain is UPF0223 protein BCA_4066, found in Bacillus cereus (strain 03BB102).